A 95-amino-acid chain; its full sequence is Feather keratin B-4 (95 aa).

N-acetylserine is present on serine 1.

The protein belongs to the avian keratin family. As to quaternary structure, the avian keratins (F-ker, S-ker, C-ker and B-ker) are a complex mixture of very similar polypeptides.

This chain is Feather keratin B-4, found in Anas platyrhynchos (Mallard).